The following is a 562-amino-acid chain: MSGTILENLSGRKLSILVSSLMLCQVACFLMGGLYAPVPAGHQTVVGIKCRDVPGRQNDTNFFLYSRGNGACKSLQDMDIEQDPLKMANQLVYVFQMPLPRDNRTLDYSRWQQNLIGVLQVDIAYDSSSELREPPKELQLTIDTRLAYRNKKDADTDWKLYAHSVEQRYLDCHAAHVGLLETLYTCDIIPLFELGALHHNFYLLNLRFPIDTPKRMNLQFGHMHDLTLTAIHQNGGFTQVWLLLKTLLFPFVVGIMIWFWRRVHILQRSPALLEYMLLYLGGALSFLNLPLEYLTLSIEMPYMLLLSDVRQGIFYAMLLSFWLVFAGEHMLIQDTPNKSTIRSRYWKHLSAVVVGCISLFVFDICERGVQLRNPFYSIWTTPLGAKVAMSFIVLAGVSAAIYFLFLCFMVWKVFKDIGDKRTSLPSMSQARRLHYEGLIYRFKFLMLATLLCAGLTVAGFIMGQMAEGHWKWNEDIEIQLTSAFLTGVYGMWNIYIFALIILYAPSHKQWPTMRHSDETTQSNENIVASAASEEIEFSNLPSDSNPSEISSLTSFTRKVAFD.

The Cytoplasmic segment spans residues 1-13 (MSGTILENLSGRK). A helical transmembrane segment spans residues 14–34 (LSILVSSLMLCQVACFLMGGL). At 35–239 (YAPVPAGHQT…AIHQNGGFTQ (205 aa)) the chain is on the lumenal side. N-linked (GlcNAc...) asparagine glycans are attached at residues asparagine 58 and asparagine 103. Residues 240–260 (VWLLLKTLLFPFVVGIMIWFW) form a helical membrane-spanning segment. The Cytoplasmic segment spans residues 261 to 270 (RRVHILQRSP). A helical transmembrane segment spans residues 271–291 (ALLEYMLLYLGGALSFLNLPL). At 292–311 (EYLTLSIEMPYMLLLSDVRQ) the chain is on the lumenal side. A helical membrane pass occupies residues 312–332 (GIFYAMLLSFWLVFAGEHMLI). The Cytoplasmic portion of the chain corresponds to 333–344 (QDTPNKSTIRSR). A helical transmembrane segment spans residues 345–365 (YWKHLSAVVVGCISLFVFDIC). At 366-390 (ERGVQLRNPFYSIWTTPLGAKVAMS) the chain is on the lumenal side. The helical transmembrane segment at 391 to 411 (FIVLAGVSAAIYFLFLCFMVW) threads the bilayer. Over 412–441 (KVFKDIGDKRTSLPSMSQARRLHYEGLIYR) the chain is Cytoplasmic. The helical transmembrane segment at 442 to 462 (FKFLMLATLLCAGLTVAGFIM) threads the bilayer. Residues 463–482 (GQMAEGHWKWNEDIEIQLTS) are Lumenal-facing. A helical membrane pass occupies residues 483–503 (AFLTGVYGMWNIYIFALIILY). At 504–562 (APSHKQWPTMRHSDETTQSNENIVASAASEEIEFSNLPSDSNPSEISSLTSFTRKVAFD) the chain is on the cytoplasmic side.

Belongs to the wntless family. In terms of assembly, interacts with wg; in the Golgi. Interacts with Vps35, a component of the retromer complex; wls stability is regulated by Vps35.

The protein resides in the presynaptic cell membrane. The protein localises to the postsynaptic cell membrane. It is found in the cell membrane. Its subcellular location is the endoplasmic reticulum membrane. It localises to the endosome membrane. The protein resides in the golgi apparatus membrane. A segment polarity gene required for wingless (wg)-dependent patterning processes, acting in both wg-sending cells and wg-target cells. In non-neuronal cells wls directs wg secretion. The wls traffic loop encompasses the Golgi, the cell surface, an endocytic compartment and a retrograde route leading back to the Golgi, and involves clathrin-mediated endocytosis and the retromer complex (a conserved protein complex consisting of Vps35 and Vps26). In neuronal cells (the larval motorneuron NMJ), the wg signal moves across the synapse via the release of wls-containing exosome-like vesicles. Postsynaptic wls is required for the trafficking of fz2 through the fz2-interacting protein Grip. This is Protein wntless from Drosophila virilis (Fruit fly).